A 228-amino-acid polypeptide reads, in one-letter code: Triosephosphate isomerase (228 aa).

Substrate is bound at residue 9–11 (NFK). The active-site Electrophile is the His93. Residue Glu141 is the Proton acceptor of the active site. Substrate contacts are provided by residues Ile146, Gly180, and 201–202 (AS).

Belongs to the triosephosphate isomerase family. Homotetramer; dimer of dimers.

It is found in the cytoplasm. It catalyses the reaction D-glyceraldehyde 3-phosphate = dihydroxyacetone phosphate. The protein operates within carbohydrate biosynthesis; gluconeogenesis. It functions in the pathway carbohydrate degradation; glycolysis; D-glyceraldehyde 3-phosphate from glycerone phosphate: step 1/1. Its function is as follows. Involved in the gluconeogenesis. Catalyzes stereospecifically the conversion of dihydroxyacetone phosphate (DHAP) to D-glyceraldehyde-3-phosphate (G3P). The chain is Triosephosphate isomerase from Metallosphaera sedula (strain ATCC 51363 / DSM 5348 / JCM 9185 / NBRC 15509 / TH2).